Here is a 621-residue protein sequence, read N- to C-terminus: Ubiquitin carboxyl-terminal hydrolase MINDY-2 (621 aa).

2 disordered regions span residues 1–106 and 119–179; these read MESS…RGQY and VGHE…LESF. S94 carries the post-translational modification Phosphoserine. Residues 145–163 are compositionally biased toward low complexity; sequence AAGSEEPSSAGGLSSSCSD. C266 serves as the catalytic Nucleophile. H448 acts as the Proton acceptor in catalysis. Residues 507-559 form a ubiquitin-binding domain (UBD) region; the sequence is GQQDQIDQDYLMALSLQQEQQSQEINWEQIPEGISDLELAKKLQEEEDRRASQ. The interval 556–621 is disordered; it reads RASQYYQEQE…EKEKNSCVIL (66 aa). Positions 558-591 are enriched in low complexity; it reads SQYYQEQEQAAAAAAAASTQAQQGQPAQASPSSG. Over residues 597-621 the composition is skewed to basic and acidic residues; the sequence is SERKRKEPREKDKEKEKEKNSCVIL.

Belongs to the MINDY deubiquitinase family. FAM63 subfamily.

The catalysed reaction is Thiol-dependent hydrolysis of ester, thioester, amide, peptide and isopeptide bonds formed by the C-terminal Gly of ubiquitin (a 76-residue protein attached to proteins as an intracellular targeting signal).. In terms of biological role, hydrolase that can remove 'Lys-48'-linked conjugated ubiquitin from proteins. Binds to polyubiquitin chains of different linkage types, including 'Lys-6', 'Lys-11', 'Lys-29', 'Lys-33', 'Lys-48' and 'Lys-63'. May play a regulatory role at the level of protein turnover. This Homo sapiens (Human) protein is Ubiquitin carboxyl-terminal hydrolase MINDY-2.